Consider the following 312-residue polypeptide: Glyoxylate/hydroxypyruvate reductase A (312 aa).

The active site involves Arg-227. Catalysis depends on His-275, which acts as the Proton donor.

Belongs to the D-isomer specific 2-hydroxyacid dehydrogenase family. GhrA subfamily.

It localises to the cytoplasm. The enzyme catalyses glycolate + NADP(+) = glyoxylate + NADPH + H(+). It catalyses the reaction (R)-glycerate + NAD(+) = 3-hydroxypyruvate + NADH + H(+). The catalysed reaction is (R)-glycerate + NADP(+) = 3-hydroxypyruvate + NADPH + H(+). Catalyzes the NADPH-dependent reduction of glyoxylate and hydroxypyruvate into glycolate and glycerate, respectively. Inactive towards 2-oxo-D-gluconate, 2-oxoglutarate, oxaloacetate and pyruvate. Only D- and L-glycerate are involved in the oxidative activity with NADP. Activity with NAD is very low. The protein is Glyoxylate/hydroxypyruvate reductase A (ghrA) of Escherichia coli (strain K12).